Consider the following 258-residue polypeptide: Ubiquinone/menaquinone biosynthesis C-methyltransferase UbiE (258 aa).

S-adenosyl-L-methionine is bound by residues T81, D102, and 130-131 (NA).

The protein belongs to the class I-like SAM-binding methyltransferase superfamily. MenG/UbiE family.

The catalysed reaction is a 2-demethylmenaquinol + S-adenosyl-L-methionine = a menaquinol + S-adenosyl-L-homocysteine + H(+). It catalyses the reaction a 2-methoxy-6-(all-trans-polyprenyl)benzene-1,4-diol + S-adenosyl-L-methionine = a 5-methoxy-2-methyl-3-(all-trans-polyprenyl)benzene-1,4-diol + S-adenosyl-L-homocysteine + H(+). Its pathway is quinol/quinone metabolism; menaquinone biosynthesis; menaquinol from 1,4-dihydroxy-2-naphthoate: step 2/2. It functions in the pathway cofactor biosynthesis; ubiquinone biosynthesis. Functionally, methyltransferase required for the conversion of demethylmenaquinol (DMKH2) to menaquinol (MKH2) and the conversion of 2-polyprenyl-6-methoxy-1,4-benzoquinol (DDMQH2) to 2-polyprenyl-3-methyl-6-methoxy-1,4-benzoquinol (DMQH2). The sequence is that of Ubiquinone/menaquinone biosynthesis C-methyltransferase UbiE from Allorhizobium ampelinum (strain ATCC BAA-846 / DSM 112012 / S4) (Agrobacterium vitis (strain S4)).